Consider the following 346-residue polypeptide: MPRGQKSKLRAREKRQRTRGQTQDLKVGQPTAAEKEESPSSSSSVLRDTASSSLAFGIPQEPQREPPTTSAAAAMSCTGSDKGDESQDEENASSSQASTSTERSLKDSLTRKTKMLVQFLLYKYKMKEPTTKAEMLKIISKKYKEHFPEIFRKVSQRTELVFGLALKEVNPTTHSYILVSMLGPNDGNQSSAWTLPRNGLLMPLLSVIFLNGNCAREEEIWEFLNMLGIYDGKRHLIFGEPRKLITQDLVQEKYLEYQQVPNSDPPRYQFLWGPRAHAETSKMKVLEFLAKVNDTTPNNFPLLYEEALRDEEERAGARPRVAARRGTTAMTSAYSRATSSSSSQPM.

Residues 1–18 (MPRGQKSKLRAREKRQRT) show a composition bias toward basic residues. The disordered stretch occupies residues 1–107 (MPRGQKSKLR…STSTERSLKD (107 aa)). A compositionally biased stretch (polar residues) spans 45–54 (VLRDTASSSL). Low complexity predominate over residues 92–101 (ASSSQASTST). In terms of domain architecture, MAGE spans 109–307 (LTRKTKMLVQ…NNFPLLYEEA (199 aa)). The disordered stretch occupies residues 311–346 (EEERAGARPRVAARRGTTAMTSAYSRATSSSSSQPM). The span at 318–346 (RPRVAARRGTTAMTSAYSRATSSSSSQPM) shows a compositional bias: low complexity.

Expressed in testis.

Its subcellular location is the cytoplasm. This Homo sapiens (Human) protein is Melanoma-associated antigen B4 (MAGEB4).